The following is a 391-amino-acid chain: Formate-dependent phosphoribosylglycinamide formyltransferase (391 aa).

N(1)-(5-phospho-beta-D-ribosyl)glycinamide-binding positions include 20 to 21 (EL) and Glu-80. Residues Arg-112, Lys-153, 158–163 (SSGKGQ), 193–196 (EGFI), and Glu-201 each bind ATP. One can recognise an ATP-grasp domain in the interval 117 to 306 (RLAAEELGLT…EFALHVRAFT (190 aa)). Mg(2+) contacts are provided by Glu-265 and Glu-277. Residues Asp-284, Lys-354, and 361 to 362 (RR) each bind N(1)-(5-phospho-beta-D-ribosyl)glycinamide.

This sequence belongs to the PurK/PurT family. Homodimer.

The catalysed reaction is N(1)-(5-phospho-beta-D-ribosyl)glycinamide + formate + ATP = N(2)-formyl-N(1)-(5-phospho-beta-D-ribosyl)glycinamide + ADP + phosphate + H(+). It functions in the pathway purine metabolism; IMP biosynthesis via de novo pathway; N(2)-formyl-N(1)-(5-phospho-D-ribosyl)glycinamide from N(1)-(5-phospho-D-ribosyl)glycinamide (formate route): step 1/1. Functionally, involved in the de novo purine biosynthesis. Catalyzes the transfer of formate to 5-phospho-ribosyl-glycinamide (GAR), producing 5-phospho-ribosyl-N-formylglycinamide (FGAR). Formate is provided by PurU via hydrolysis of 10-formyl-tetrahydrofolate. This is Formate-dependent phosphoribosylglycinamide formyltransferase from Vibrio vulnificus (strain CMCP6).